The chain runs to 400 residues: Nicotinate phosphoribosyltransferase (400 aa).

A Phosphohistidine; by autocatalysis modification is found at His220.

This sequence belongs to the NAPRTase family. Transiently phosphorylated on a His residue during the reaction cycle. Phosphorylation strongly increases the affinity for substrates and increases the rate of nicotinate D-ribonucleotide production. Dephosphorylation regenerates the low-affinity form of the enzyme, leading to product release.

The enzyme catalyses nicotinate + 5-phospho-alpha-D-ribose 1-diphosphate + ATP + H2O = nicotinate beta-D-ribonucleotide + ADP + phosphate + diphosphate. Its pathway is cofactor biosynthesis; NAD(+) biosynthesis; nicotinate D-ribonucleotide from nicotinate: step 1/1. Catalyzes the synthesis of beta-nicotinate D-ribonucleotide from nicotinate and 5-phospho-D-ribose 1-phosphate at the expense of ATP. The chain is Nicotinate phosphoribosyltransferase from Salmonella typhimurium (strain LT2 / SGSC1412 / ATCC 700720).